A 182-amino-acid polypeptide reads, in one-letter code: Acireductone dioxygenase (182 aa).

Fe(2+)-binding residues include His100, His102, Glu106, and His145. Positions 100, 102, 106, and 145 each coordinate Ni(2+).

The protein belongs to the acireductone dioxygenase (ARD) family. In terms of assembly, monomer. The cofactor is Fe(2+). Requires Ni(2+) as cofactor.

It catalyses the reaction 1,2-dihydroxy-5-(methylsulfanyl)pent-1-en-3-one + O2 = 3-(methylsulfanyl)propanoate + CO + formate + 2 H(+). It carries out the reaction 1,2-dihydroxy-5-(methylsulfanyl)pent-1-en-3-one + O2 = 4-methylsulfanyl-2-oxobutanoate + formate + 2 H(+). It functions in the pathway amino-acid biosynthesis; L-methionine biosynthesis via salvage pathway; L-methionine from S-methyl-5-thio-alpha-D-ribose 1-phosphate: step 5/6. Functionally, catalyzes 2 different reactions between oxygen and the acireductone 1,2-dihydroxy-3-keto-5-methylthiopentene (DHK-MTPene) depending upon the metal bound in the active site. Fe-containing acireductone dioxygenase (Fe-ARD) produces formate and 2-keto-4-methylthiobutyrate (KMTB), the alpha-ketoacid precursor of methionine in the methionine recycle pathway. Ni-containing acireductone dioxygenase (Ni-ARD) produces methylthiopropionate, carbon monoxide and formate, and does not lie on the methionine recycle pathway. This is Acireductone dioxygenase from Nostoc sp. (strain PCC 7120 / SAG 25.82 / UTEX 2576).